Reading from the N-terminus, the 86-residue chain is Cell division topological specificity factor (86 aa).

It belongs to the MinE family.

Functionally, prevents the cell division inhibition by proteins MinC and MinD at internal division sites while permitting inhibition at polar sites. This ensures cell division at the proper site by restricting the formation of a division septum at the midpoint of the long axis of the cell. The chain is Cell division topological specificity factor from Parasynechococcus marenigrum (strain WH8102).